The primary structure comprises 561 residues: uncharacterized protein (561 aa).

2 consecutive transmembrane segments (helical) span residues 29–49 and 80–100; these read FIFNVGSLTPTTAVLGVKKII and FLFHTVGFFPIYTSSIGASII.

It localises to the cell membrane. This is an uncharacterized protein from Mycoplasma genitalium (strain ATCC 33530 / DSM 19775 / NCTC 10195 / G37) (Mycoplasmoides genitalium).